The following is a 196-amino-acid chain: Heat shock protein beta-8 (196 aa).

The tract at residues 1–34 is disordered; it reads MADGQMPFPCHYTSRRRRDPFRDSPLSSRLLDDG. Positions 23 to 34 are enriched in low complexity; that stretch reads DSPLSSRLLDDG. Phosphoserine occurs at positions 24 and 57. A Phosphothreonine modification is found at threonine 63. Asymmetric dimethylarginine occurs at positions 71 and 78. The sHSP domain occupies 74 to 185; that stretch reads TAMTRFGVPA…PFGESSFNNE (112 aa). Serine 87 carries the post-translational modification Phosphoserine. Residues 176–196 are disordered; it reads PFGESSFNNELPQDGQEVTCT. The segment covering 178 to 196 has biased composition (polar residues); that stretch reads GESSFNNELPQDGQEVTCT.

Belongs to the small heat shock protein (HSP20) family. Monomer. Forms a ternary complex with BAG3 and HSPA1A. Component of the chaperone-assisted selective autophagy (CASA) complex consisting of BAG3, HSPA8/HSC70, HSPB8 and STUB1/CHIP. Interacts with HSPB1. Interacts with DNAJB6. Interacts with BAG3. Phosphorylated.

Its subcellular location is the cytoplasm. The protein localises to the nucleus. Functionally, involved in the chaperone-assisted selective autophagy (CASA), a crucial process for protein quality control, particularly in mechanical strained cells and tissues such as muscle. Displays temperature-dependent chaperone activity. This chain is Heat shock protein beta-8 (HSPB8), found in Bos taurus (Bovine).